Here is a 275-residue protein sequence, read N- to C-terminus: uncharacterized protein (275 aa).

Disordered stretches follow at residues 1–25 and 185–275; these read MIGGERVLLGSQKREPSNEEDDQEQ and QRGE…RHHM. Residues 228–239 show a composition bias toward basic and acidic residues; it reads KPGDGEENAKDD.

This is an uncharacterized protein from Neurospora crassa (strain ATCC 24698 / 74-OR23-1A / CBS 708.71 / DSM 1257 / FGSC 987).